A 524-amino-acid polypeptide reads, in one-letter code: Ribose import ATP-binding protein RbsA (524 aa).

ABC transporter domains lie at 17-252 (LQLD…GRSI) and 263-505 (IGQP…VSQV). 49–56 (GENGAGKS) contributes to the ATP binding site.

Belongs to the ABC transporter superfamily. Ribose importer (TC 3.A.1.2.1) family. As to quaternary structure, the complex is composed of an ATP-binding protein (RbsA), two transmembrane proteins (RbsC) and a solute-binding protein (RbsB).

The protein resides in the cell membrane. It catalyses the reaction D-ribose(out) + ATP + H2O = D-ribose(in) + ADP + phosphate + H(+). In terms of biological role, part of the ABC transporter complex RbsABC involved in ribose import. Responsible for energy coupling to the transport system. The sequence is that of Ribose import ATP-binding protein RbsA from Corynebacterium glutamicum (strain ATCC 13032 / DSM 20300 / JCM 1318 / BCRC 11384 / CCUG 27702 / LMG 3730 / NBRC 12168 / NCIMB 10025 / NRRL B-2784 / 534).